The chain runs to 452 residues: uncharacterized protein (452 aa).

A disordered region spans residues 1-452 (MTAVSSNRNP…LRKPEADTAL (452 aa)). Polar residues-rich tracts occupy residues 29–41 (RTGT…VSSN), 95–111 (SPQT…SNRN), 129–144 (SPQT…SSNR), and 163–176 (SPQT…AVSS). Over residues 177-193 (NRDHEDDGCLLKQESRG) the composition is skewed to basic and acidic residues. Polar residues-rich tracts occupy residues 197 to 212 (SPQT…SSNR), 231 to 245 (SPQT…VSSN), 265 to 280 (SPQT…SSNR), 299 to 314 (SPQT…SSNR), 333 to 347 (SPQT…VSSK), 376 to 394 (TAVS…SNRN), and 412 to 426 (SPQT…VSSN). Residues 439–452 (EPQELRKPEADTAL) are compositionally biased toward basic and acidic residues.

This is an uncharacterized protein from Homo sapiens (Human).